Here is a 304-residue protein sequence, read N- to C-terminus: Dermonecrotic toxin LiSicTox-betaIA1i (304 aa).

Residues 1 to 21 (MLLPAVISFIVYAVFLQEANG) form the signal peptide. The propeptide occupies 22–26 (HAAER). The active site involves histidine 38. Mg(2+) is bound by residues glutamate 58 and aspartate 60. Histidine 74 serves as the catalytic Nucleophile. Cystine bridges form between cysteine 78/cysteine 84 and cysteine 80/cysteine 223. Aspartate 118 contributes to the Mg(2+) binding site.

It belongs to the arthropod phospholipase D family. Class II subfamily. Class IIb sub-subfamily. Mg(2+) is required as a cofactor. In terms of tissue distribution, expressed by the venom gland.

Its subcellular location is the secreted. The catalysed reaction is an N-(acyl)-sphingosylphosphocholine = an N-(acyl)-sphingosyl-1,3-cyclic phosphate + choline. The enzyme catalyses an N-(acyl)-sphingosylphosphoethanolamine = an N-(acyl)-sphingosyl-1,3-cyclic phosphate + ethanolamine. It carries out the reaction a 1-acyl-sn-glycero-3-phosphocholine = a 1-acyl-sn-glycero-2,3-cyclic phosphate + choline. It catalyses the reaction a 1-acyl-sn-glycero-3-phosphoethanolamine = a 1-acyl-sn-glycero-2,3-cyclic phosphate + ethanolamine. Its function is as follows. Dermonecrotic toxins cleave the phosphodiester linkage between the phosphate and headgroup of certain phospholipids (sphingolipid and lysolipid substrates), forming an alcohol (often choline) and a cyclic phosphate. This toxin acts on sphingomyelin (SM) with low activity. It may also act on ceramide phosphoethanolamine (CPE), lysophosphatidylcholine (LPC) and lysophosphatidylethanolamine (LPE), but not on lysophosphatidylserine (LPS), and lysophosphatidylglycerol (LPG). It acts by transphosphatidylation, releasing exclusively cyclic phosphate products as second products. Induces inflammatory response but no or very weak hemolysis, dermonecrosis, vascular permeability, edema, and cytotoxicity against renal epithelial cells. Causes swelling and erythema. In vivo, is not lethal to mice when intraperitoneally injected. This is Dermonecrotic toxin LiSicTox-betaIA1i from Loxosceles intermedia (Brown spider).